The sequence spans 136 residues: Endonuclease II (136 aa).

The GIY-YIG domain maps to 32-131 (KYNVIYAIAI…IKLFNPPWNI (100 aa)).

Homotetramer. Mg(2+) is required as a cofactor.

The enzyme catalyses Endonucleolytic nicking and cleavage of cytosine-containing double-stranded DNA.. Its function is as follows. Contributes to the degradation of host DNA, permitting the scavenging of host-derived nucleotides for phage DNA synthesis. Sequence-specific endonuclease. Catalyzes nicking of the bottom strand of double-stranded DNA between the first and second base pair to the right of a top-strand CCGC motif. Does not cleave native phage DNA, which contains 5-hydroxymethylcytosine instead of cytosine. This chain is Endonuclease II (denA), found in Escherichia coli (Bacteriophage T4).